The sequence spans 453 residues: Glutamyl-tRNA(Gln) amidotransferase subunit A (453 aa).

Active-site charge relay system residues include K56 and S131. S155 serves as the catalytic Acyl-ester intermediate.

This sequence belongs to the amidase family. GatA subfamily. In terms of assembly, heterotrimer of A, B and C subunits.

The catalysed reaction is L-glutamyl-tRNA(Gln) + L-glutamine + ATP + H2O = L-glutaminyl-tRNA(Gln) + L-glutamate + ADP + phosphate + H(+). Allows the formation of correctly charged Gln-tRNA(Gln) through the transamidation of misacylated Glu-tRNA(Gln) in organisms which lack glutaminyl-tRNA synthetase. The reaction takes place in the presence of glutamine and ATP through an activated gamma-phospho-Glu-tRNA(Gln). The sequence is that of Glutamyl-tRNA(Gln) amidotransferase subunit A from Campylobacter jejuni (strain RM1221).